Reading from the N-terminus, the 448-residue chain is Na(+)-translocating NADH-quinone reductase subunit A (448 aa).

It belongs to the NqrA family. Composed of six subunits; NqrA, NqrB, NqrC, NqrD, NqrE and NqrF.

It catalyses the reaction a ubiquinone + n Na(+)(in) + NADH + H(+) = a ubiquinol + n Na(+)(out) + NAD(+). Its function is as follows. NQR complex catalyzes the reduction of ubiquinone-1 to ubiquinol by two successive reactions, coupled with the transport of Na(+) ions from the cytoplasm to the periplasm. NqrA to NqrE are probably involved in the second step, the conversion of ubisemiquinone to ubiquinol. The polypeptide is Na(+)-translocating NADH-quinone reductase subunit A (Alcanivorax borkumensis (strain ATCC 700651 / DSM 11573 / NCIMB 13689 / SK2)).